The sequence spans 431 residues: Trigger factor (431 aa).

In terms of domain architecture, PPIase FKBP-type spans 158 to 243 (GYLVALETWS…VIEVSEPVLL (86 aa)).

Belongs to the FKBP-type PPIase family. Tig subfamily.

The protein localises to the cytoplasm. It catalyses the reaction [protein]-peptidylproline (omega=180) = [protein]-peptidylproline (omega=0). Its function is as follows. Involved in protein export. Acts as a chaperone by maintaining the newly synthesized protein in an open conformation. Functions as a peptidyl-prolyl cis-trans isomerase. This chain is Trigger factor, found in Xylella fastidiosa (strain M23).